We begin with the raw amino-acid sequence, 537 residues long: Chaperonin GroEL (537 aa).

ATP contacts are provided by residues 31-34 (TLGP), 87-91 (DGTTT), Gly415, and Asp495.

This sequence belongs to the chaperonin (HSP60) family. Forms a cylinder of 14 subunits composed of two heptameric rings stacked back-to-back. Interacts with the co-chaperonin GroES.

The protein localises to the cytoplasm. The enzyme catalyses ATP + H2O + a folded polypeptide = ADP + phosphate + an unfolded polypeptide.. Its function is as follows. Together with its co-chaperonin GroES, plays an essential role in assisting protein folding. The GroEL-GroES system forms a nano-cage that allows encapsulation of the non-native substrate proteins and provides a physical environment optimized to promote and accelerate protein folding. The polypeptide is Chaperonin GroEL (Methanoregula boonei (strain DSM 21154 / JCM 14090 / 6A8)).